The following is a 137-amino-acid chain: Large ribosomal subunit protein uL16 (137 aa).

This sequence belongs to the universal ribosomal protein uL16 family. As to quaternary structure, part of the 50S ribosomal subunit.

In terms of biological role, binds 23S rRNA and is also seen to make contacts with the A and possibly P site tRNAs. The polypeptide is Large ribosomal subunit protein uL16 (Afipia carboxidovorans (strain ATCC 49405 / DSM 1227 / KCTC 32145 / OM5) (Oligotropha carboxidovorans)).